We begin with the raw amino-acid sequence, 529 residues long: Putative inorganic phosphate cotransporter (529 aa).

Helical transmembrane passes span 37 to 57, 110 to 130, 148 to 168, 202 to 222, 232 to 252, 338 to 358, 429 to 449, and 466 to 486; these read FATR…AYVM, YILS…GILA, VFAF…LCAV, AVYA…GLLA, SIFY…LIFV, LPYL…DWMI, FLMS…PIAA, and IVFF…NIFG. The interval 495–529 is disordered; the sequence is NPEDDEQKPALQTTVTTSPARLSNGSTAPAAISSS. A compositionally biased stretch (polar residues) spans 504–529; sequence ALQTTVTTSPARLSNGSTAPAAISSS.

It belongs to the major facilitator superfamily. Sodium/anion cotransporter family.

The protein resides in the membrane. May be an inorganic phosphate cotransporter. This is Putative inorganic phosphate cotransporter (Picot) from Drosophila melanogaster (Fruit fly).